Here is a 231-residue protein sequence, read N- to C-terminus: tRNA (guanine-N(1)-)-methyltransferase (231 aa).

S-adenosyl-L-methionine is bound by residues G112 and 132-137 (LGDFVL).

The protein belongs to the RNA methyltransferase TrmD family. As to quaternary structure, homodimer.

The protein localises to the cytoplasm. The enzyme catalyses guanosine(37) in tRNA + S-adenosyl-L-methionine = N(1)-methylguanosine(37) in tRNA + S-adenosyl-L-homocysteine + H(+). Specifically methylates guanosine-37 in various tRNAs. The protein is tRNA (guanine-N(1)-)-methyltransferase of Gloeothece citriformis (strain PCC 7424) (Cyanothece sp. (strain PCC 7424)).